Here is a 246-residue protein sequence, read N- to C-terminus: Ubiquinone biosynthesis O-methyltransferase (246 aa).

S-adenosyl-L-methionine contacts are provided by Arg-44, Gly-63, Asp-84, and Met-128.

The protein belongs to the methyltransferase superfamily. UbiG/COQ3 family.

It catalyses the reaction a 3-demethylubiquinol + S-adenosyl-L-methionine = a ubiquinol + S-adenosyl-L-homocysteine + H(+). It carries out the reaction a 3-(all-trans-polyprenyl)benzene-1,2-diol + S-adenosyl-L-methionine = a 2-methoxy-6-(all-trans-polyprenyl)phenol + S-adenosyl-L-homocysteine + H(+). It functions in the pathway cofactor biosynthesis; ubiquinone biosynthesis. Functionally, O-methyltransferase that catalyzes the 2 O-methylation steps in the ubiquinone biosynthetic pathway. The protein is Ubiquinone biosynthesis O-methyltransferase of Xylella fastidiosa (strain 9a5c).